A 283-amino-acid chain; its full sequence is MTNIINGRQIAKQLNQETKTRVDKLKEEGIIPGIVVILVGDDPASVIYTRNKQKNAEKLGMKSILRKFPKDVSQAEVLQAIHHYNDDPTIHAILIQLPLPKHLNQTELIEAIAPEKDVDGFNSKNVGKLYNNEEGHYPVSCTSRGIMTLLHTYLDKIEGLNVTIVGRSILVSRPLQSLLINENATVTMVSLHTDNIDYYTKHADILVVAAGKPNLIKKDQVKPGATVIDVGINRMANHYLVGDVDFDDVKEVAKNITPVPGGVGPMTIATLMQQTVDLAEWNK.

NADP(+) contacts are provided by residues 166–168 and isoleucine 232; that span reads GRS.

The protein belongs to the tetrahydrofolate dehydrogenase/cyclohydrolase family. In terms of assembly, homodimer.

The catalysed reaction is (6R)-5,10-methylene-5,6,7,8-tetrahydrofolate + NADP(+) = (6R)-5,10-methenyltetrahydrofolate + NADPH. The enzyme catalyses (6R)-5,10-methenyltetrahydrofolate + H2O = (6R)-10-formyltetrahydrofolate + H(+). The protein operates within one-carbon metabolism; tetrahydrofolate interconversion. In terms of biological role, catalyzes the oxidation of 5,10-methylenetetrahydrofolate to 5,10-methenyltetrahydrofolate and then the hydrolysis of 5,10-methenyltetrahydrofolate to 10-formyltetrahydrofolate. In Lactobacillus johnsonii (strain CNCM I-12250 / La1 / NCC 533), this protein is Bifunctional protein FolD 1.